Consider the following 61-residue polypeptide: Large ribosomal subunit protein bL32 (61 aa).

Over residues 1-16 (MAVPRRKTSPSRRGMR) the composition is skewed to basic residues. Positions 1-61 (MAVPRRKTSP…RQVLKAKSDS (61 aa)) are disordered. A compositionally biased stretch (basic and acidic residues) spans 27 to 44 (YAEDKDSGELRRPHHLDL).

Belongs to the bacterial ribosomal protein bL32 family.

The polypeptide is Large ribosomal subunit protein bL32 (Nitrobacter winogradskyi (strain ATCC 25391 / DSM 10237 / CIP 104748 / NCIMB 11846 / Nb-255)).